Here is a 161-residue protein sequence, read N- to C-terminus: Lipoprotein signal peptidase (161 aa).

Helical transmembrane passes span Leu8–Ala28, Ile40–Ser60, Gln67–Ile87, and Ile91–Phe111. Active-site residues include Asp122 and Asp140. The chain crosses the membrane as a helical span at residues Phe136–Phe156.

Belongs to the peptidase A8 family.

The protein localises to the cell inner membrane. It carries out the reaction Release of signal peptides from bacterial membrane prolipoproteins. Hydrolyzes -Xaa-Yaa-Zaa-|-(S,diacylglyceryl)Cys-, in which Xaa is hydrophobic (preferably Leu), and Yaa (Ala or Ser) and Zaa (Gly or Ala) have small, neutral side chains.. Its pathway is protein modification; lipoprotein biosynthesis (signal peptide cleavage). This protein specifically catalyzes the removal of signal peptides from prolipoproteins. This chain is Lipoprotein signal peptidase, found in Francisella tularensis subsp. tularensis (strain FSC 198).